Reading from the N-terminus, the 1053-residue chain is Mediator of RNA polymerase II transcription subunit 16 (1053 aa).

Residues 139–170 (KTEGNTEKNKDTKQIGNGSGTNGHGDSPINTP) form a disordered region. Basic and acidic residues predominate over residues 142–151 (GNTEKNKDTK).

It belongs to the Mediator complex subunit 16 family. Component of the Mediator complex.

The protein resides in the nucleus. Component of the Mediator complex, a coactivator involved in the regulated transcription of nearly all RNA polymerase II-dependent genes. Mediator functions as a bridge to convey information from gene-specific regulatory proteins to the basal RNA polymerase II transcription machinery. Mediator is recruited to promoters by direct interactions with regulatory proteins and serves as a scaffold for the assembly of a functional preinitiation complex with RNA polymerase II and the general transcription factors. The sequence is that of Mediator of RNA polymerase II transcription subunit 16 (SIN4) from Candida albicans (strain SC5314 / ATCC MYA-2876) (Yeast).